Here is a 363-residue protein sequence, read N- to C-terminus: Putative lipoate-protein ligase A (363 aa).

Residues 49 to 229 (STAKHCLLLY…CFLLHKSHST (181 aa)) enclose the BPL/LPL catalytic domain. ATP is bound by residues arginine 91, 96–99 (GTVF), and lysine 152. Lysine 152 is a binding site for (R)-lipoate.

This sequence belongs to the LplA family. In terms of assembly, monomer.

It localises to the cytoplasm. It carries out the reaction L-lysyl-[lipoyl-carrier protein] + (R)-lipoate + ATP = N(6)-[(R)-lipoyl]-L-lysyl-[lipoyl-carrier protein] + AMP + diphosphate + H(+). Its pathway is protein modification; protein lipoylation via exogenous pathway; protein N(6)-(lipoyl)lysine from lipoate: step 1/2. The protein operates within protein modification; protein lipoylation via exogenous pathway; protein N(6)-(lipoyl)lysine from lipoate: step 2/2. In terms of biological role, catalyzes both the ATP-dependent activation of exogenously supplied lipoate to lipoyl-AMP and the transfer of the activated lipoyl onto the lipoyl domains of lipoate-dependent enzymes. This chain is Putative lipoate-protein ligase A (aim22), found in Schizosaccharomyces pombe (strain 972 / ATCC 24843) (Fission yeast).